A 521-amino-acid chain; its full sequence is Glutamyl-tRNA(Gln) amidotransferase subunit A, mitochondrial (521 aa).

Active-site charge relay system residues include Lys-61 and Ser-139. Ser-163 acts as the Acyl-ester intermediate in catalysis.

It belongs to the amidase family. GatA subfamily. In terms of assembly, subunit of the heterotrimeric GatCAB amidotransferase (AdT) complex, composed of A, B and C subunits.

It is found in the mitochondrion. The catalysed reaction is L-glutamyl-tRNA(Gln) + L-glutamine + ATP + H2O = L-glutaminyl-tRNA(Gln) + L-glutamate + ADP + phosphate + H(+). Its function is as follows. Allows the formation of correctly charged Gln-tRNA(Gln) through the transamidation of misacylated Glu-tRNA(Gln) in the mitochondria. The reaction takes place in the presence of glutamine and ATP through an activated gamma-phospho-Glu-tRNA(Gln). The polypeptide is Glutamyl-tRNA(Gln) amidotransferase subunit A, mitochondrial (Ajellomyces capsulatus (strain G186AR / H82 / ATCC MYA-2454 / RMSCC 2432) (Darling's disease fungus)).